Reading from the N-terminus, the 240-residue chain is MORN repeat-containing protein 3 (240 aa).

The tract at residues 6 to 35 is interaction with MDM2; sequence CPKKSESLWKGWDRKAQKNGLRRQVYAVNG. MORN repeat units lie at residues 38 to 60, 62 to 84, 91 to 113, 114 to 136, 137 to 159, 160 to 182, and 184 to 205; these read YVGE…KNGA, YEGD…DQQT, YSGW…PKEY, YEGE…NGDI, YEGQ…NGNR, YEGC…DHGQ, and FEGF…GRDE. An interaction with SIRT1 region spans residues 76-100; sequence TLSLPDQQTGKCRRVYSGWWKGDKK. The interaction with TP53 stretch occupies residues 206–240; sequence APEPTQFPIPEVKILDPDGVLAQALAMFKKTEEGD.

In terms of assembly, interacts with MEIG1. Interacts with TP53, MDM2 and SIRT1; the interactions mediate post-transcriptional modifications of TP53 by MDM2 and SIRT1.

The protein localises to the cytoplasmic vesicle. Its subcellular location is the secretory vesicle. It is found in the acrosome. Functionally, assembles a suppression complex (suppresome) by tethering SIRT1 and MDM2 to regulate composite modifications of p53/TP53. Confers both deacetylation-mediated functional inactivation, by SIRT1, and ubiquitination-dependent degradation, by MDM2, of p53/TP53, promoting a proliferative and cell survival behaviors. May play a role in the regulation of spermatogenesis. The polypeptide is MORN repeat-containing protein 3 (MORN3) (Macaca fascicularis (Crab-eating macaque)).